A 49-amino-acid chain; its full sequence is uncharacterized protein (49 aa).

The chain crosses the membrane as a helical span at residues 17 to 39; that stretch reads LLVFDTSLYIPPFMLSFIGYSLS.

Its subcellular location is the membrane. This is an uncharacterized protein from Saccharomyces cerevisiae (strain ATCC 204508 / S288c) (Baker's yeast).